We begin with the raw amino-acid sequence, 511 residues long: Cysteine--tRNA ligase 2, cytoplasmic (511 aa).

Residue Cys34 participates in Zn(2+) binding. The 'HIGH' region motif lies at 36 to 46 (ITAYDFSHIGH). Zn(2+) contacts are provided by Cys214, His239, and Glu243. Positions 271 to 275 (KMAKS) match the 'KMSKS' region motif. Lys274 serves as a coordination point for ATP. TPR repeat units lie at residues 315–348 (ESSS…DGGK) and 368–401 (SKML…LKKM).

It belongs to the class-I aminoacyl-tRNA synthetase family. Requires Zn(2+) as cofactor.

The protein resides in the cytoplasm. Its subcellular location is the cytosol. It catalyses the reaction tRNA(Cys) + L-cysteine + ATP = L-cysteinyl-tRNA(Cys) + AMP + diphosphate. The sequence is that of Cysteine--tRNA ligase 2, cytoplasmic from Arabidopsis thaliana (Mouse-ear cress).